The following is a 633-amino-acid chain: DNA mismatch repair protein MutL (633 aa).

The disordered stretch occupies residues 338–407 (AAPEPERTLP…VPPPTLRAIP (70 aa)). The segment covering 366 to 391 (PGSAFPAAARPAPASSAAQPPLSSSA) has biased composition (low complexity).

The protein belongs to the DNA mismatch repair MutL/HexB family.

Functionally, this protein is involved in the repair of mismatches in DNA. It is required for dam-dependent methyl-directed DNA mismatch repair. May act as a 'molecular matchmaker', a protein that promotes the formation of a stable complex between two or more DNA-binding proteins in an ATP-dependent manner without itself being part of a final effector complex. The chain is DNA mismatch repair protein MutL from Akkermansia muciniphila (strain ATCC BAA-835 / DSM 22959 / JCM 33894 / BCRC 81048 / CCUG 64013 / CIP 107961 / Muc).